Reading from the N-terminus, the 1377-residue chain is DNA-directed RNA polymerase subunit beta' (1377 aa).

Zn(2+) contacts are provided by Cys60, Cys62, Cys75, and Cys78. Mg(2+) contacts are provided by Asp449, Asp451, and Asp453. Zn(2+) is bound by residues Cys777, Cys851, Cys858, and Cys861.

This sequence belongs to the RNA polymerase beta' chain family. In terms of assembly, the RNAP catalytic core consists of 2 alpha, 1 beta, 1 beta' and 1 omega subunit. When a sigma factor is associated with the core the holoenzyme is formed, which can initiate transcription. It depends on Mg(2+) as a cofactor. Zn(2+) serves as cofactor.

The enzyme catalyses RNA(n) + a ribonucleoside 5'-triphosphate = RNA(n+1) + diphosphate. Its function is as follows. DNA-dependent RNA polymerase catalyzes the transcription of DNA into RNA using the four ribonucleoside triphosphates as substrates. This chain is DNA-directed RNA polymerase subunit beta', found in Borrelia hermsii (strain HS1 / DAH).